Here is a 363-residue protein sequence, read N- to C-terminus: DNA replication and repair protein RecF (363 aa).

30–37 (GINGSGKS) is an ATP binding site.

It belongs to the RecF family.

Its subcellular location is the cytoplasm. In terms of biological role, the RecF protein is involved in DNA metabolism; it is required for DNA replication and normal SOS inducibility. RecF binds preferentially to single-stranded, linear DNA. It also seems to bind ATP. In Pseudoalteromonas atlantica (strain T6c / ATCC BAA-1087), this protein is DNA replication and repair protein RecF.